A 294-amino-acid chain; its full sequence is Lipoprotein NlpI (294 aa).

Positions 1–18 (MKPFLRWCFVATALTLAG) are cleaved as a signal peptide. C19 carries the N-palmitoyl cysteine lipid modification. C19 carries the S-diacylglycerol cysteine lipid modification. TPR repeat units lie at residues 62 to 95 (AQLL…RPDM), 96 to 129 (PEVF…DPTY), and 234 to 267 (SETN…NVHN).

In terms of assembly, homodimer.

It localises to the cell membrane. May be involved in cell division. May play a role in bacterial septation or regulation of cell wall degradation during cell division. The protein is Lipoprotein NlpI (nlpI) of Escherichia coli O17:K52:H18 (strain UMN026 / ExPEC).